Consider the following 423-residue polypeptide: Probable electron transfer flavoprotein-quinone oxidoreductase YgcN (423 aa).

7–21 (IIIIGAGIAGTACAL) serves as a coordination point for FAD.

This sequence belongs to the ETF-QO/FixC family. The cofactor is FAD.

Functionally, probably accepts electrons from YgcQ/YgcR and reduces a quinone. The protein is Probable electron transfer flavoprotein-quinone oxidoreductase YgcN (ygcN) of Escherichia coli (strain K12).